Reading from the N-terminus, the 1460-residue chain is MKYNNLENDDSDIHNNNNNNESEGDSLIELEEINLEGNNNNDINNNNNINNNNDSLDYENNKGSKKKNNKKYVILNEEEDINDKKVENGENETSSFTYGHDNEFKDLPLPKKGFGGLKSLEENANFLSSMTYLWADKFVLYCFKNILQLDEIWELASYDKSSYLFDIMDKNWQNELKNSKKPNFMKAAFKSFGKHFALSWVHFGLNVISQFIGPIFLKKIVSFVIQYRENPGSVDPNLGYYYALILFVNSMLGSIFLYQSNMITSRTGNRLKSLIVLYVYKKSLKLTNSSRSKKSNGEIVNLMSNDAQRLLELFQMVNTLIFAVPMIIVSMILLYDCVGWPSFVALLVMGISLPYSLNRGSQLSIYRRKLVGFTDQRIKVVNEMFQAIKTIKLYAWEDYFSQKMMSKRGEEIKFLTQFVRFRYSLIVVVQSIPTIISIFMFTVYYLVNSKLPADKIFAAVAYLNIIRVPFTFLPYGYNIYIQFKVSIERVVNFLNMDEINQGDDKNNEINVNVCDQQKQQQTDIGIYMDNTTFSWAIKPQTNPPPPRTTPSNDKSSPSGNNSNNEKKEVQVSFSLKNTSCQVKEKGSLLMVIGPVGSGKSSFCQALLGEMELENNGSLRVVGSIAYVSQSAWIMNASLKDNILFGKEYNKERYEMVLNCCALLPDLALFPQGDLIEIGERGINLSGGQKQRVAIARAVYSDSDIYILDDILSAVDAHVGKHLFYNCIKGILKEKIVVLATNQLNYCPYSTQTLILKTGGEVEQYDTFENIISTINSAYGNSSLFSELLKQYAHMAGDSDKDSDEIVDDEMIKSKENNNDLYDGKLTTIEEREEGSVSFKHYMYYVTAGGGFLFLIALLGYCIDTSTSTFTNWWLSNWSSKHTSTGINNNNSSSSNSISSSSSYIIDSLSSLNINEDGDIENAGEFLGVFIAIGVLTVLLIIVRTIVFFEYSIRATTEIHKRLFWSILRAPMWFFDTVPLGRILNRFTRDTDIVDMLLTNSLNQFLNFSTNCIAILVIISIATPWLLLPMTPIIILFYFIQYFYRRTSIQIQRIESITRSPIFSHFAETLNGVITLRAFRKMGENVLKNQALLDDNNKCYLTLQAMNQWLGLRLSVLGNLITLLSCIFITVDRSSIAIASVGLSISYTLSLTTNLNKATQQLAELETKMNSIERISYYTENVPQEPDQIIESNRPPMGWPSLTNSNHTPPIIFENVVMSYRQGLPAVLKGISFEIKAGEKIGICGRTGSGKSSLLLALFRIVELSSGRIIIDGLDISKIGLKDLRSQLAIIPQEPVMFTGTLRSNLDSLSEHTDSELWDVLKEIQLYEHVKKVSVADEGLDLRVNDNWSQGQKQLIGLGRALLKKPKILVCDEATASVDSLSDELIQRIIREKFKDAIILTIAHRLNTIVESDRIMVLDSGSIVEFNKPSILAQNENSLFNWLIDETGTQNSQYLRSLIKH.

Disordered regions lie at residues 1 to 23 (MKYNNLENDDSDIHNNNNNNESE) and 37 to 68 (GNNNNDINNNNNINNNNDSLDYENNKGSKKKN). Over residues 37–55 (GNNNNDINNNNNINNNNDS) the composition is skewed to low complexity. The next 5 membrane-spanning stretches (helical) occupy residues 196 to 216 (FALSWVHFGLNVISQFIGPIF), 238 to 258 (LGYYYALILFVNSMLGSIFLY), 320 to 340 (LIFAVPMIIVSMILLYDCVGW), 425 to 445 (LIVVVQSIPTIISIFMFTVYY), and 456 to 476 (IFAAVAYLNIIRVPFTFLPYG). An ABC transmembrane type-1 1 domain is found at 196–482 (FALSWVHFGL…LPYGYNIYIQ (287 aa)). The tract at residues 537–567 (IKPQTNPPPPRTTPSNDKSSPSGNNSNNEKK) is disordered. A compositionally biased stretch (polar residues) spans 551-563 (SNDKSSPSGNNSN). The 224-residue stretch at 560-783 (NNSNNEKKEV…INSAYGNSSL (224 aa)) folds into the ABC transporter 1 domain. 593–600 (GPVGSGKS) contacts ATP. A run of 4 helical transmembrane segments spans residues 842–862 (MYYVTAGGGFLFLIALLGYCI), 922–942 (AGEFLGVFIAIGVLTVLLIIV), 1014–1034 (ILVIISIATPWLLLPMTPIII), and 1108–1128 (WLGLRLSVLGNLITLLSCIFI). The ABC transmembrane type-1 2 domain maps to 853–1166 (FLIALLGYCI…ATQQLAELET (314 aa)). An ABC transporter 2 domain is found at 1210 to 1444 (IIFENVVMSY…ENSLFNWLID (235 aa)). 1244-1251 (GRTGSGKS) provides a ligand contact to ATP.

It belongs to the ABC transporter superfamily. ABCC family. Conjugate transporter (TC 3.A.1.208) subfamily.

The protein localises to the membrane. This Dictyostelium discoideum (Social amoeba) protein is ABC transporter C family member 5 (abcC5).